The following is a 484-amino-acid chain: Glutamate--tRNA ligase (484 aa).

The short motif at 11-21 (PSPTGYLHIGN) is the 'HIGH' region element. The 'KMSKS' region signature appears at 252-256 (KLSKR). Position 255 (Lys255) interacts with ATP.

It belongs to the class-I aminoacyl-tRNA synthetase family. Glutamate--tRNA ligase type 1 subfamily. In terms of assembly, monomer.

The protein resides in the cytoplasm. It carries out the reaction tRNA(Glu) + L-glutamate + ATP = L-glutamyl-tRNA(Glu) + AMP + diphosphate. Functionally, catalyzes the attachment of glutamate to tRNA(Glu) in a two-step reaction: glutamate is first activated by ATP to form Glu-AMP and then transferred to the acceptor end of tRNA(Glu). The chain is Glutamate--tRNA ligase from Staphylococcus aureus (strain Newman).